The following is a 161-amino-acid chain: Allophycocyanin beta chain (161 aa).

Position 71 is an N4-methylasparagine (Asn-71). A (2R,3E)-phycocyanobilin-binding site is contributed by Cys-81.

Belongs to the phycobiliprotein family. In terms of assembly, heterodimer of an alpha and a beta chain. Post-translationally, contains one covalently linked phycocyanobilin chromophore.

It localises to the cellular thylakoid membrane. Functionally, light-harvesting photosynthetic bile pigment-protein from the phycobiliprotein complex. Allophycocyanin has a maximum absorption at approximately 650 nanometers. The polypeptide is Allophycocyanin beta chain (apcB) (Anabaena cylindrica).